The following is a 308-amino-acid chain: Dipeptide transport system permease protein DppB (308 aa).

7 helical membrane passes run 10 to 30 (WAMA…MKVI), 59 to 79 (LIFQ…GPSI), 100 to 120 (LGMT…VIAA), 131 to 151 (AMSL…TLLI), 168 to 188 (SPIH…AIIA), 228 to 248 (MPVI…SFVI), and 278 to 298 (VFYS…YGLL). The ABC transmembrane type-1 domain occupies 94–295 (FPVSFELGMT…IMLFLVDLAY (202 aa)).

This sequence belongs to the binding-protein-dependent transport system permease family. OppBC subfamily.

It is found in the cell membrane. Probably part of the ABC transporter DppBCDE involved in dipeptide transport. Responsible for the translocation of the substrate across the membrane. The polypeptide is Dipeptide transport system permease protein DppB (dppB) (Bacillus subtilis (strain 168)).